Here is a 53-residue protein sequence, read N- to C-terminus: Sec-independent protein translocase protein TatA (53 aa).

A helical transmembrane segment spans residues 1 to 21 (MGMSVSHLLIVLLIIFVLFGA).

This sequence belongs to the TatA/E family. As to quaternary structure, the Tat system comprises two distinct complexes: a TatABC complex, containing multiple copies of TatA, TatB and TatC subunits, and a separate TatA complex, containing only TatA subunits. Substrates initially bind to the TatABC complex, which probably triggers association of the separate TatA complex to form the active translocon.

It localises to the cell inner membrane. Part of the twin-arginine translocation (Tat) system that transports large folded proteins containing a characteristic twin-arginine motif in their signal peptide across membranes. TatA could form the protein-conducting channel of the Tat system. In Rickettsia massiliae (strain Mtu5), this protein is Sec-independent protein translocase protein TatA.